The primary structure comprises 331 residues: MDEFSENIERIALELLSNLVHGNATLSVPRNSSGNVISEYRRVSYNNRGSRHSFCVLIYMLSRVHRLQVRGGSFTVRGLYYDNPLLVRSQSRIAEARLDVCRMLRTSPLSLGILAASKGLVAGDLRLLMTNGDVLDSSLYGGPLTLPTDPEKIDRIETLAEFVLIVEKESVFESLLSRNVFGTFERRFILITGKGYPDCCTRRIVHRLTEENQLAAYILVDADPFGVEIMLVYRHGSKSMSFSSQGLTTPALRWIGLHPSEIPALGTGAVALVAGDNKKINDLLARHDLEPGVRQELRMLQDVQLKAEIESVIDFLTDDYIPNKINRNLFL.

Positions 1 to 120 (MDEFSENIER…LGILAASKGL (120 aa)) constitute a Topo IIA-type catalytic domain. The O-(5'-phospho-DNA)-tyrosine intermediate role is filled by tyrosine 81. Mg(2+) is bound by residues glutamate 167 and aspartate 221.

Belongs to the TOP6A family. It depends on Mg(2+) as a cofactor.

The protein localises to the nucleus. The catalysed reaction is ATP-dependent breakage, passage and rejoining of double-stranded DNA.. Required for meiotic recombination. Together with mei-P22, mediates DNA cleavage that forms the double-strand breaks (DSB) that initiate meiotic recombination. In Drosophila melanogaster (Fruit fly), this protein is Meiotic recombination protein W68.